We begin with the raw amino-acid sequence, 162 residues long: Protein A49R (162 aa).

It belongs to the poxviridae A49 protein family. As to quaternary structure, interacts with host BTRC; this interaction inhibits NF-kappa-B activation.

It localises to the host cytoplasm. The protein resides in the host nucleus. In terms of biological role, plays a role in the inhibition of host NF-kappa-B activation. Interacts with host BTRC and thereby diminishes ubiquitination of NF-kappa-B inhibitor alpha/NFKBIA. This stabilizes NFKBIA and its interaction with NF-kappaB, so retaining p65/RELA in the cytoplasm and preventing NF-kappa-B-dependent gene expression. In Bos taurus (Bovine), this protein is Protein A49R.